The sequence spans 268 residues: UDP-2,3-diacylglucosamine hydrolase (268 aa).

The Mn(2+) site is built by Asp25, His27, Asp58, Asn97, and His132. 97 to 98 (NR) is a binding site for substrate. 4 residues coordinate substrate: Asp140, Ser178, Glu191, and His222. Residues His222 and His224 each contribute to the Mn(2+) site.

It belongs to the LpxH family. Requires Mn(2+) as cofactor.

The protein resides in the cell inner membrane. It carries out the reaction UDP-2-N,3-O-bis[(3R)-3-hydroxytetradecanoyl]-alpha-D-glucosamine + H2O = 2-N,3-O-bis[(3R)-3-hydroxytetradecanoyl]-alpha-D-glucosaminyl 1-phosphate + UMP + 2 H(+). It participates in glycolipid biosynthesis; lipid IV(A) biosynthesis; lipid IV(A) from (3R)-3-hydroxytetradecanoyl-[acyl-carrier-protein] and UDP-N-acetyl-alpha-D-glucosamine: step 4/6. Hydrolyzes the pyrophosphate bond of UDP-2,3-diacylglucosamine to yield 2,3-diacylglucosamine 1-phosphate (lipid X) and UMP by catalyzing the attack of water at the alpha-P atom. Involved in the biosynthesis of lipid A, a phosphorylated glycolipid that anchors the lipopolysaccharide to the outer membrane of the cell. The chain is UDP-2,3-diacylglucosamine hydrolase from Ralstonia nicotianae (strain ATCC BAA-1114 / GMI1000) (Ralstonia solanacearum).